The sequence spans 118 residues: Non-specific lipid-transfer protein (118 aa).

The signal sequence occupies residues 1 to 27 (MGVSKVAIAVAVMLMVVVINHPAVVEG). Intrachain disulfides connect Cys30–Cys75, Cys40–Cys54, Cys55–Cys100, and Cys77–Cys114.

The protein belongs to the plant LTP family. Post-translationally, disulfide bonds.

Functionally, plant non-specific lipid-transfer proteins transfer phospholipids as well as galactolipids across membranes. May play a role in wax or cutin deposition in the cell walls of expanding epidermal cells and certain secretory tissues. The polypeptide is Non-specific lipid-transfer protein (Apium graveolens (Celery)).